The primary structure comprises 450 residues: LanC-like protein 2 (450 aa).

Gly2 carries the N-myristoyl glycine lipid modification. Positions 2–14 are interaction with inositol phospholipids; sequence GETMSKRLKFHLG. Tyr198 is subject to Phosphotyrosine.

It belongs to the LanC-like protein family. As to quaternary structure, interacts with an array of inositol phospholipids such as phosphatidylinositol 3-phosphate (PI3P), phosphatidylinositol 4-phosphate (PI4P) and phosphatidylinositol 5-phosphate (PI5P). PIP-binding enhances membrane association. Myristoylated. Essential for membrane association.

The protein localises to the nucleus. The protein resides in the cytoplasm. Its subcellular location is the cell membrane. Necessary for abscisic acid (ABA) binding on the cell membrane and activation of the ABA signaling pathway in granulocytes. This Mus musculus (Mouse) protein is LanC-like protein 2 (Lancl2).